The sequence spans 424 residues: MTESASCHGGGVCGGLAQEEGQRQVFCGLTSIVWLHRKMRDAFFLVVGSRTCAHLLQSAAGVMIFAEPRFATAVLGERDLAGMADCNEELDRVVHELLARRPEIRTLFLVGSCPSEVIKLDLGKAAERLTAAHEGRVRVLPYSGSGLETTFTQGEDQFLTTLAHELPASPEGAPSLIVLGTLADVVEDQFRRLFDQLGIGPVHFLPPRTGADLPPVGPGTRVLQAQPFTGEATRALIRRGAERLDAPYPLGVEGTRSWLQAATRSFGVPDEQLEAVIEAPIARAQAALERQRGVLSGKRITFLPDSQLELPLARFLSEECGMQPVEVATPYFDREFHGRERDALGEEVRLVEGQDVDAQLDRLRADRPDLTVCGLGLANPLEAEGLRTKWSIELVFSPIQGFEQAGDLAELFARPLVRHETLKV.

[4Fe-4S] cluster-binding residues include Cys-27, Cys-52, and Cys-113.

Belongs to the BchN/ChlN family. In terms of assembly, protochlorophyllide reductase is composed of three subunits; BchL, BchN and BchB. Forms a heterotetramer of two BchB and two BchN subunits. It depends on [4Fe-4S] cluster as a cofactor.

It carries out the reaction chlorophyllide a + oxidized 2[4Fe-4S]-[ferredoxin] + 2 ADP + 2 phosphate = protochlorophyllide a + reduced 2[4Fe-4S]-[ferredoxin] + 2 ATP + 2 H2O. The protein operates within porphyrin-containing compound metabolism; bacteriochlorophyll biosynthesis (light-independent). Component of the dark-operative protochlorophyllide reductase (DPOR) that uses Mg-ATP and reduced ferredoxin to reduce ring D of protochlorophyllide (Pchlide) to form chlorophyllide a (Chlide). This reaction is light-independent. The NB-protein (BchN-BchB) is the catalytic component of the complex. The sequence is that of Light-independent protochlorophyllide reductase subunit N from Halorhodospira halophila (strain DSM 244 / SL1) (Ectothiorhodospira halophila (strain DSM 244 / SL1)).